The primary structure comprises 324 residues: Glyoxylate/hydroxypyruvate reductase B (324 aa).

Catalysis depends on residues arginine 237 and glutamate 266. The Proton donor role is filled by histidine 285.

The protein belongs to the D-isomer specific 2-hydroxyacid dehydrogenase family. GhrB subfamily. Homodimer.

The protein resides in the cytoplasm. It catalyses the reaction glycolate + NADP(+) = glyoxylate + NADPH + H(+). The enzyme catalyses (R)-glycerate + NAD(+) = 3-hydroxypyruvate + NADH + H(+). The catalysed reaction is (R)-glycerate + NADP(+) = 3-hydroxypyruvate + NADPH + H(+). In terms of biological role, catalyzes the NADPH-dependent reduction of glyoxylate and hydroxypyruvate into glycolate and glycerate, respectively. This Shigella sonnei (strain Ss046) protein is Glyoxylate/hydroxypyruvate reductase B.